The following is a 130-amino-acid chain: Osteocrin (130 aa).

The first 25 residues, 1-25 (MLDWRLASTHFILAMIVMLWGSGKA), serve as a signal peptide directing secretion. Arg129 bears the Arginine amide mark.

Belongs to the Osteocrin family. As to quaternary structure, interacts with NPR3. As to expression, expressed in skeletal muscle and to a much lesser extent in bone, brown adipose tissue, spleen and testis. Not expressed in neurons.

The protein resides in the secreted. In terms of biological role, hormone that acts as a ligand for natriuretic peptide receptor NPR3/NPR-C and promotes bone growth and physical endurance in muscle. Acts as a regulator of osteoblast differentiation and bone growth by binding to natriuretic peptide receptor NPR3/NPR-C, thereby preventing binding between NPR3/NPR-C and natriuretic peptides, leading to increase cGMP production. Required to enhance physical endurance: induced following physical exercise in muscle and promotes cGMP production, probably by interacting with NPR3/NPR-C. May act as an autocrine and paracrine factor linked to glucose metabolism in skeletal muscle. The chain is Osteocrin from Mus musculus (Mouse).